Reading from the N-terminus, the 588-residue chain is Aspartate--tRNA ligase (588 aa).

Glu-174 is an L-aspartate binding site. The aspartate stretch occupies residues 198-201; the sequence is QLFK. Residue Arg-220 participates in L-aspartate binding. Residues 220 to 222 and Gln-229 contribute to the ATP site; that span reads RDE. Position 448 (His-448) interacts with L-aspartate. Residue Glu-482 participates in ATP binding. Residue Arg-489 coordinates L-aspartate. 534–537 contributes to the ATP binding site; it reads GLDR.

This sequence belongs to the class-II aminoacyl-tRNA synthetase family. Type 1 subfamily. Homodimer.

It is found in the cytoplasm. The enzyme catalyses tRNA(Asp) + L-aspartate + ATP = L-aspartyl-tRNA(Asp) + AMP + diphosphate. Functionally, catalyzes the attachment of L-aspartate to tRNA(Asp) in a two-step reaction: L-aspartate is first activated by ATP to form Asp-AMP and then transferred to the acceptor end of tRNA(Asp). This Exiguobacterium sibiricum (strain DSM 17290 / CCUG 55495 / CIP 109462 / JCM 13490 / 255-15) protein is Aspartate--tRNA ligase.